The sequence spans 546 residues: uncharacterized protein (546 aa).

A run of 10 helical transmembrane segments spans residues 106–126 (WWIV…SSVY), 145–165 (TLGS…FAPL), 172–192 (FIIY…GGCA), 231–251 (YVLP…PIIG), 263–283 (WTFW…FIFF), 332–352 (LIFT…VYII), 375–395 (GLSF…TPFI), 416–436 (LYPL…FAWT), 444–464 (WIVP…VFFV), and 510–530 (WATS…FIFY).

The protein belongs to the major facilitator superfamily. CAR1 family.

It localises to the endoplasmic reticulum membrane. This is an uncharacterized protein from Schizosaccharomyces pombe (strain 972 / ATCC 24843) (Fission yeast).